Reading from the N-terminus, the 371-residue chain is Cytochrome b (371 aa).

4 helical membrane-spanning segments follow: residues 25–45 (FGSMLLTCLALQTLTGFFLAV), 69–90 (WMMQNLHAIGASMFFICIYIHI), 105–125 (WMSGITLLIILMATAFFGYVL), and 170–190 (FFALHFILPFAIISLSSLHVI). 2 residues coordinate heme b: H75 and H89. Heme b contacts are provided by H174 and H188. H193 contributes to the a ubiquinone binding site. 4 helical membrane-spanning segments follow: residues 218–238 (YKDLLLLTLMILSLLIIVSFF), 280–300 (LGGALALVMSIMILLTIPFTH), 312–332 (LSQLMFWTLVSTFITITWAAT), and 339–358 (FIIISQVTATLYFTFFISTP).

Belongs to the cytochrome b family. In terms of assembly, the cytochrome bc1 complex contains 3 respiratory subunits (MT-CYB, CYC1 and UQCRFS1), 2 core proteins (UQCRC1 and UQCRC2) and probably 6 low-molecular weight proteins. Requires heme b as cofactor.

It localises to the mitochondrion inner membrane. Functionally, component of the ubiquinol-cytochrome c reductase complex (complex III or cytochrome b-c1 complex) that is part of the mitochondrial respiratory chain. The b-c1 complex mediates electron transfer from ubiquinol to cytochrome c. Contributes to the generation of a proton gradient across the mitochondrial membrane that is then used for ATP synthesis. The sequence is that of Cytochrome b (MT-CYB) from Python sebae (African rock python).